The primary structure comprises 153 residues: Putative nuclear shuttle protein (153 aa).

Belongs to the nanoviridae nuclear shuttle protein family.

The protein resides in the host nucleus. It localises to the host cytoplasm. Putative nuclear shuttle protein. In Cicer arietinum (Chickpea), this protein is Putative nuclear shuttle protein (DNA-N).